The following is a 653-amino-acid chain: DNA-directed RNA polymerase III subunit RPC-3 (653 aa).

Disordered regions lie at residues 141-186 (INGV…DSDP), 280-309 (DSSAPRKRLKLDGPLEDDVKDEDDGDDFSD), and 422-442 (IKEDEDDEDEEGGPVSMKRRG). Positions 159–170 (AENHTDHAHDYQ) are enriched in basic and acidic residues. 2 stretches are compositionally biased toward acidic residues: residues 293–309 (PLEDDVKDEDDGDDFSD) and 424–433 (EDEDDEDEEG). The leucine-zipper stretch occupies residues 580–601 (TYKSMSRCLQRIRVEREKLKFL).

The protein belongs to the RNA polymerase beta chain family. Component of the RNA polymerase III (Pol III) complex consisting of 17 subunits.

The protein localises to the nucleus. Its function is as follows. DNA-dependent RNA polymerase catalyzes the transcription of DNA into RNA using the four ribonucleoside triphosphates as substrates. Specific core component of RNA polymerase III which synthesizes small RNAs, such as 5S rRNA and tRNAs. In Coccidioides immitis (strain RS) (Valley fever fungus), this protein is DNA-directed RNA polymerase III subunit RPC-3 (RPC-82).